The chain runs to 212 residues: Lipid A acyltransferase PagP (212 aa).

The first 26 residues, 1–26 (MSSTYFHSSLLAATLFSVTLTAPAFA), serve as a signal peptide directing secretion. The segment covering 29 to 44 (NTQNTPQTITTKKPQP) has biased composition (low complexity). The interval 29 to 50 (NTQNTPQTITTKKPQPAENTFS) is disordered. Active-site residues include His84, Asp127, and Ser128.

This sequence belongs to the lipid A palmitoyltransferase family. As to quaternary structure, homodimer.

The protein localises to the cell outer membrane. The catalysed reaction is a lipid A + a 1,2-diacyl-sn-glycero-3-phosphocholine = a hepta-acyl lipid A + a 2-acyl-sn-glycero-3-phosphocholine. The enzyme catalyses a lipid IVA + a 1,2-diacyl-sn-glycero-3-phosphocholine = a lipid IVB + a 2-acyl-sn-glycero-3-phosphocholine. It carries out the reaction a lipid IIA + a 1,2-diacyl-sn-glycero-3-phosphocholine = a lipid IIB + a 2-acyl-sn-glycero-3-phosphocholine. Functionally, transfers a fatty acid residue from the sn-1 position of a phospholipid to the N-linked hydroxyfatty acid chain on the proximal unit of lipid A or its precursors. The chain is Lipid A acyltransferase PagP from Proteus mirabilis (strain HI4320).